A 231-amino-acid polypeptide reads, in one-letter code: Cytidylate kinase 1 (231 aa).

Glycine 7–threonine 15 contributes to the ATP binding site.

The protein belongs to the cytidylate kinase family. Type 1 subfamily.

Its subcellular location is the cytoplasm. The enzyme catalyses CMP + ATP = CDP + ADP. It catalyses the reaction dCMP + ATP = dCDP + ADP. This is Cytidylate kinase 1 from Haemophilus influenzae (strain ATCC 51907 / DSM 11121 / KW20 / Rd).